The primary structure comprises 447 residues: Protein king tubby (447 aa).

Composition is skewed to low complexity over residues 71–92 and 157–169; these read GTGP…YSDS and NNNN…NSSS. The disordered stretch occupies residues 71–196; that stretch reads GTGPNVTATS…GGAPDTEGDV (126 aa).

The protein belongs to the TUB family.

The protein resides in the cytoplasm. It is found in the nucleus. This Anopheles gambiae (African malaria mosquito) protein is Protein king tubby.